Reading from the N-terminus, the 147-residue chain is Spermidine export protein MdtJ (147 aa).

The next 4 helical transmembrane spans lie at 1-21 (MIYW…TLSM), 31-51 (TGHI…SLAV), 54-74 (VALG…ITIF), and 81-101 (ETLS…ILLV). Over residues 105-117 (TRKPKQPNRHRGN) the composition is skewed to basic residues. The disordered stretch occupies residues 105–147 (TRKPKQPNRHRGNRPPSVQGLKTQTTGHHKGVAVESGEHHAAA).

It belongs to the drug/metabolite transporter (DMT) superfamily. Small multidrug resistance (SMR) (TC 2.A.7.1) family. MdtJ subfamily. In terms of assembly, forms a complex with MdtI.

The protein localises to the cell inner membrane. Catalyzes the excretion of spermidine. The chain is Spermidine export protein MdtJ from Yersinia pseudotuberculosis serotype O:3 (strain YPIII).